A 192-amino-acid chain; its full sequence is dTTP/UTP pyrophosphatase (192 aa).

Residue D70 is the Proton acceptor of the active site.

This sequence belongs to the Maf family. YhdE subfamily. It depends on a divalent metal cation as a cofactor.

The protein resides in the cytoplasm. The catalysed reaction is dTTP + H2O = dTMP + diphosphate + H(+). It catalyses the reaction UTP + H2O = UMP + diphosphate + H(+). Functionally, nucleoside triphosphate pyrophosphatase that hydrolyzes dTTP and UTP. May have a dual role in cell division arrest and in preventing the incorporation of modified nucleotides into cellular nucleic acids. This chain is dTTP/UTP pyrophosphatase, found in Alkaliphilus metalliredigens (strain QYMF).